The following is a 622-amino-acid chain: Low affinity potassium transport system protein Kup (622 aa).

Helical transmembrane passes span 9-29 (LPAV…TSPL), 49-69 (VFGF…LKYL), 101-121 (VLVI…VITP), 137-157 (PAMD…LFII), 165-185 (VGKL…VLGV), 212-232 (AVSF…EALY), 247-267 (WFTV…ALLL), 276-296 (PFFL…ATLA), 337-357 (IYIP…IVSF), 363-383 (LAAA…ILFC), 397-417 (AWVL…ANVV), and 419-439 (ILSG…IMTT).

The protein belongs to the HAK/KUP transporter (TC 2.A.72) family.

Its subcellular location is the cell inner membrane. It carries out the reaction K(+)(in) + H(+)(in) = K(+)(out) + H(+)(out). Responsible for the low-affinity transport of potassium into the cell. Likely operates as a K(+):H(+) symporter. The polypeptide is Low affinity potassium transport system protein Kup (Pectobacterium atrosepticum (strain SCRI 1043 / ATCC BAA-672) (Erwinia carotovora subsp. atroseptica)).